Here is a 352-residue protein sequence, read N- to C-terminus: MRKIIHVDMDCFYAAIEMRDNPRLRDIPLAIGGSADRRGVISTANYPARRYGVRSAMATATALRLCPHLTLLPGRMEVYKSTSRQIREIFSRYTSLIEPLSLDEAYLDVTDSPHCNGSATRIAEEIRRTIADELNLTASAGIAPIKFLAKVASELNKPNGQYVITPEQVDDFLLALPLEKIPGVGKVTAKRLEERGLHTCADVRVYALADLLKAFGKFGRVLWERCQGIDDRQISPDRQRKSVGVEKTLAQDIHNWDQCENLIEQLYQELEVRLKRVKPDLHIARQGVKLKFDDFQQTTQEHVWPMLNKQDLLKLAQQTWQERRKSRGVRLVGLHVTLLDPQIERQLVFDWG.

Residues 4–185 (IIHVDMDCFY…LPLEKIPGVG (182 aa)) enclose the UmuC domain. The Mg(2+) site is built by Asp-8 and Asp-103. The active site involves Glu-104.

This sequence belongs to the DNA polymerase type-Y family. In terms of assembly, monomer. Requires Mg(2+) as cofactor.

The protein resides in the cytoplasm. The enzyme catalyses DNA(n) + a 2'-deoxyribonucleoside 5'-triphosphate = DNA(n+1) + diphosphate. Its function is as follows. Poorly processive, error-prone DNA polymerase involved in untargeted mutagenesis. Copies undamaged DNA at stalled replication forks, which arise in vivo from mismatched or misaligned primer ends. These misaligned primers can be extended by PolIV. Exhibits no 3'-5' exonuclease (proofreading) activity. May be involved in translesional synthesis, in conjunction with the beta clamp from PolIII. This is DNA polymerase IV from Pectobacterium atrosepticum (strain SCRI 1043 / ATCC BAA-672) (Erwinia carotovora subsp. atroseptica).